A 240-amino-acid polypeptide reads, in one-letter code: 1-(5-phosphoribosyl)-5-[(5-phosphoribosylamino)methylideneamino] imidazole-4-carboxamide isomerase (240 aa).

Aspartate 8 (proton acceptor) is an active-site residue. Aspartate 130 serves as the catalytic Proton donor.

It belongs to the HisA/HisF family.

It is found in the cytoplasm. The catalysed reaction is 1-(5-phospho-beta-D-ribosyl)-5-[(5-phospho-beta-D-ribosylamino)methylideneamino]imidazole-4-carboxamide = 5-[(5-phospho-1-deoxy-D-ribulos-1-ylimino)methylamino]-1-(5-phospho-beta-D-ribosyl)imidazole-4-carboxamide. The protein operates within amino-acid biosynthesis; L-histidine biosynthesis; L-histidine from 5-phospho-alpha-D-ribose 1-diphosphate: step 4/9. The chain is 1-(5-phosphoribosyl)-5-[(5-phosphoribosylamino)methylideneamino] imidazole-4-carboxamide isomerase from Elusimicrobium minutum (strain Pei191).